The chain runs to 337 residues: ATP-dependent 6-phosphofructokinase (337 aa).

Gly-11 contacts ATP. ADP is bound at residue 21–25 (RAVVR). ATP is bound by residues 72-73 (RY) and 102-105 (GDGS). Position 103 (Asp-103) interacts with Mg(2+). 125-127 (TID) serves as a coordination point for substrate. Residue Asp-127 is the Proton acceptor of the active site. Residue Arg-154 coordinates ADP. Residues Arg-162 and 169-171 (MGR) each bind substrate. ADP contacts are provided by residues 185–187 (GAD) and 214–216 (KNH). Residues Glu-223, Arg-245, and 251 to 254 (HILR) contribute to the substrate site.

Belongs to the phosphofructokinase type A (PFKA) family. ATP-dependent PFK group I subfamily. Prokaryotic clade 'B1' sub-subfamily. Homotetramer. The cofactor is Mg(2+).

It localises to the cytoplasm. The enzyme catalyses beta-D-fructose 6-phosphate + ATP = beta-D-fructose 1,6-bisphosphate + ADP + H(+). The protein operates within carbohydrate degradation; glycolysis; D-glyceraldehyde 3-phosphate and glycerone phosphate from D-glucose: step 3/4. Allosterically activated by ADP and other diphosphonucleosides, and allosterically inhibited by phosphoenolpyruvate. Its function is as follows. Catalyzes the phosphorylation of D-fructose 6-phosphate to fructose 1,6-bisphosphate by ATP, the first committing step of glycolysis. The sequence is that of ATP-dependent 6-phosphofructokinase from Streptococcus mutans serotype c (strain ATCC 700610 / UA159).